The primary structure comprises 429 residues: Ribosomal RNA small subunit methyltransferase B (429 aa).

Residues 254–260 (CAAPGGK), Asp277, Asp303, and Asp322 each bind S-adenosyl-L-methionine. The active-site Nucleophile is the Cys375.

It belongs to the class I-like SAM-binding methyltransferase superfamily. RsmB/NOP family.

Its subcellular location is the cytoplasm. It carries out the reaction cytidine(967) in 16S rRNA + S-adenosyl-L-methionine = 5-methylcytidine(967) in 16S rRNA + S-adenosyl-L-homocysteine + H(+). Functionally, specifically methylates the cytosine at position 967 (m5C967) of 16S rRNA. The polypeptide is Ribosomal RNA small subunit methyltransferase B (Escherichia coli O6:H1 (strain CFT073 / ATCC 700928 / UPEC)).